The sequence spans 279 residues: Energy-coupling factor transporter ATP-binding protein EcfA (279 aa).

Residues 5 to 240 (IELEKINYKY…GPELIDLGLD (236 aa)) form the ABC transporter domain. 40 to 47 (GHNGSGKS) contributes to the ATP binding site.

It belongs to the ABC transporter superfamily. Energy-coupling factor EcfA family. In terms of assembly, forms a stable energy-coupling factor (ECF) transporter complex composed of 2 membrane-embedded substrate-binding proteins (S component), 2 ATP-binding proteins (A component) and 2 transmembrane proteins (T component).

Its subcellular location is the cell membrane. In terms of biological role, ATP-binding (A) component of a common energy-coupling factor (ECF) ABC-transporter complex. Unlike classic ABC transporters this ECF transporter provides the energy necessary to transport a number of different substrates. The polypeptide is Energy-coupling factor transporter ATP-binding protein EcfA (Enterococcus faecium (Streptococcus faecium)).